Reading from the N-terminus, the 198-residue chain is Dual specificity protein phosphatase 14 (198 aa).

The region spanning 26 to 167 is the Tyrosine-protein phosphatase domain; sequence GIAQITSSLF…LIDYERQLFG (142 aa). Residue Cys-111 is the Phosphocysteine intermediate of the active site.

It belongs to the protein-tyrosine phosphatase family. Non-receptor class dual specificity subfamily. As to quaternary structure, interacts with CD28.

The enzyme catalyses O-phospho-L-tyrosyl-[protein] + H2O = L-tyrosyl-[protein] + phosphate. It catalyses the reaction O-phospho-L-seryl-[protein] + H2O = L-seryl-[protein] + phosphate. It carries out the reaction O-phospho-L-threonyl-[protein] + H2O = L-threonyl-[protein] + phosphate. Involved in the inactivation of MAP kinases. Dephosphorylates ERK, JNK and p38 MAP-kinases. Plays a negative role in TCR signaling by dephosphorylating MAP3K7 adapter TAB1 leading to its inactivation. The protein is Dual specificity protein phosphatase 14 (DUSP14) of Bos taurus (Bovine).